The following is a 139-amino-acid chain: MAAGSWKATRLLLAILVALVAFSYQVKRKTFIRIEEVSALESSVKETLEYVTDEYNKKSEDLYNFRILRILKIMKQVTGHLEYHITVEMQRTTCLKTETSLCDIQKGELHKKIQCYFSVYAIPWVEVFKILKKNCTDIS.

The N-terminal stretch at methionine 1–arginine 28 is a signal peptide. Cystine bridges form between cysteine 94-cysteine 102 and cysteine 115-cysteine 135. The N-linked (GlcNAc...) asparagine glycan is linked to asparagine 134.

It belongs to the cystatin family. In terms of tissue distribution, expressed in epididymis, where it localizes to the proximal caput and also part of the midcaput. Not detected in other tissues tested.

The protein localises to the secreted. Has antibacterial activity against the Gram-negative bacteria E.coli. May play a role in sperm maturation and fertilization. The chain is Cystatin-11 from Mus musculus (Mouse).